We begin with the raw amino-acid sequence, 314 residues long: UDP-N-acetylenolpyruvoylglucosamine reductase (314 aa).

The FAD-binding PCMH-type domain occupies 31-208 (RIGGPADYYA…LSARFRLTPK (178 aa)). Residue arginine 187 is part of the active site. Residue serine 237 is the Proton donor of the active site. Glutamate 307 is an active-site residue.

Belongs to the MurB family. It depends on FAD as a cofactor.

The protein localises to the cytoplasm. It catalyses the reaction UDP-N-acetyl-alpha-D-muramate + NADP(+) = UDP-N-acetyl-3-O-(1-carboxyvinyl)-alpha-D-glucosamine + NADPH + H(+). The protein operates within cell wall biogenesis; peptidoglycan biosynthesis. Cell wall formation. This Agathobacter rectalis (strain ATCC 33656 / DSM 3377 / JCM 17463 / KCTC 5835 / VPI 0990) (Eubacterium rectale) protein is UDP-N-acetylenolpyruvoylglucosamine reductase.